The following is a 1088-amino-acid chain: Serine/threonine-protein kinase LATS2 (1088 aa).

Residues 24-49 (EGLKQPSKSSVQGLPAGPNSDTSLDA) form a disordered region. Residue serine 83 is modified to Phosphoserine; by AURKA. Residues 98–139 (EVNRQMLQELVNAGCDQEMAGRALKQTGSRSIEAALEYISKM) form the UBA domain. The interval 101-141 (RQMLQELVNAGCDQEMAGRALKQTGSRSIEAALEYISKMGY) is interaction with ubiquitinated AMOTL2. Residues 271-280 (RSPSFQSKTP) are compositionally biased toward polar residues. The interval 271–323 (RSPSFQSKTPPETGGYASLPTKGQGGPPGAGLAFPPPAAGLYVPHPHHKQAGP) is disordered. The residue at position 279 (threonine 279) is a Phosphothreonine. Residue serine 380 is modified to Phosphoserine. Disordered stretches follow at residues 383–428 (KPGL…SLPA) and 454–483 (PQTAVGPSHPAWVPAPAPAPAPAPAPAAEG). Residues 404–413 (SRTNSFNSHQ) are compositionally biased toward polar residues. Positions 466-478 (VPAPAPAPAPAPA) are enriched in pro residues. A PPxY motif motif is present at residues 515–518 (PPPY). Residues 543–592 (SLRAGPNEPEGGDKSRKSAKGDKGGKDKKQIQTSPVPVRKNSRDEEKRES) are disordered. Positions 553–572 (GGDKSRKSAKGDKGGKDKKQ) are enriched in basic and acidic residues. The residue at position 576 (serine 576) is a Phosphoserine. Positions 583 to 592 (NSRDEEKRES) are enriched in basic and acidic residues. Residues 668 to 973 (FVKIKTLGIG…ADDLKAHPFF (306 aa)) enclose the Protein kinase domain. ATP is bound by residues 674 to 682 (LGIGAFGEV) and lysine 697. Aspartate 791 (proton acceptor) is an active-site residue. The AGC-kinase C-terminal domain occupies 974-1052 (SAIDFSSDIR…RRFFDDNGYP (79 aa)). Residues 994-1022 (SHPMDTSNFDPVDEESPWNDASEGSTKAW) form a disordered region. Threonine 1041 is modified (phosphothreonine). Residues 1056–1088 (PKPSGAEASQAESSDLESSDLVDQTEGCQPVYV) form a disordered region.

This sequence belongs to the protein kinase superfamily. AGC Ser/Thr protein kinase family. As to quaternary structure, interacts with and is phosphorylated by AURKA. Binds to AR. Interacts with AJUBA during mitosis and this complex regulates organization of the spindle apparatus through recruitment of gamma-tubulin to the centrosome. Interacts (via PPxY motif) with YAP1 (via WW domains). Interacts with MOB1A and MOB1B. Interacts with LIMD1, WTIP and AJUBA. Interacts with SNAI1. Interacts with WWC1, WWC2 and WWC3 (via their WW domains). Interacts (via UBA domain) with ubiquitinated AMOTL2; the interaction promotes LATS2 phosphorylation of YAP1. Mg(2+) serves as cofactor. In terms of processing, autophosphorylated and phosphorylated during M-phase and the G1/S-phase of the cell cycle. Phosphorylated and activated by STK3/MST2. Phosphorylated by MAP4Ks; in parallel to STK3/MST2 and resulting to its activation. Phosphorylation by NUAK2 may regulate its activity in phosphorylation and inactivation YAP1. Expressed at high levels in heart and skeletal muscle and at lower levels in all other tissues examined.

The protein localises to the cytoplasm. The protein resides in the cytoskeleton. It localises to the microtubule organizing center. It is found in the centrosome. Its subcellular location is the spindle pole. The protein localises to the nucleus. The enzyme catalyses L-seryl-[protein] + ATP = O-phospho-L-seryl-[protein] + ADP + H(+). It catalyses the reaction L-threonyl-[protein] + ATP = O-phospho-L-threonyl-[protein] + ADP + H(+). Negative regulator of YAP1 in the Hippo signaling pathway that plays a pivotal role in organ size control and tumor suppression by restricting proliferation and promoting apoptosis. The core of this pathway is composed of a kinase cascade wherein STK3/MST2 and STK4/MST1, in complex with its regulatory protein SAV1, phosphorylates and activates LATS1/2 in complex with its regulatory protein MOB1, which in turn phosphorylates and inactivates YAP1 oncoprotein and WWTR1/TAZ. Phosphorylation of YAP1 by LATS2 inhibits its translocation into the nucleus to regulate cellular genes important for cell proliferation, cell death, and cell migration. Also phosphorylates YAP1 in response to cell contact inhibition-driven WWP1 ubiquitination of AMOTL2, which results in LATS2 activation. Acts as a tumor suppressor which plays a critical role in centrosome duplication, maintenance of mitotic fidelity and genomic stability. Negatively regulates G1/S transition by down-regulating cyclin E/CDK2 kinase activity. Negative regulator of the androgen receptor. Phosphorylates SNAI1 in the nucleus leading to its nuclear retention and stabilization, which enhances its epithelial-mesenchymal transition and tumor cell invasion/migration activities. This tumor-promoting activity is independent of its effects upon YAP1 or WWTR1/TAZ. Acts as an activator of the NLRP3 inflammasome by mediating phosphorylation of 'Ser-265' of NLRP3 following NLRP3 palmitoylation, promoting NLRP3 activation by NEK7. The sequence is that of Serine/threonine-protein kinase LATS2 from Homo sapiens (Human).